A 114-amino-acid polypeptide reads, in one-letter code: T cell receptor beta variable 5-4 (114 aa).

A signal peptide spans 1–21 (MGPGLLCWALLCLLGAGSVET). An Ig-like domain is found at 22 to 114 (GVTQSPTHLI…SALYLCASSL (93 aa)). Cys-42 and Cys-110 are joined by a disulfide. Asn-90 is a glycosylation site (N-linked (GlcNAc...) asparagine).

In terms of assembly, alpha-beta TR is a heterodimer composed of an alpha and beta chain; disulfide-linked. The alpha-beta TR is associated with the transmembrane signaling CD3 coreceptor proteins to form the TR-CD3 (TcR or TCR). The assembly of alpha-beta TR heterodimers with CD3 occurs in the endoplasmic reticulum where a single alpha-beta TR heterodimer associates with one CD3D-CD3E heterodimer, one CD3G-CD3E heterodimer and one CD247 homodimer forming a stable octameric structure. CD3D-CD3E and CD3G-CD3E heterodimers preferentially associate with TR alpha and TR beta chains, respectively. The association of the CD247 homodimer is the last step of TcR assembly in the endoplasmic reticulum and is required for transport to the cell surface.

The protein localises to the cell membrane. V region of the variable domain of T cell receptor (TR) beta chain that participates in the antigen recognition. Alpha-beta T cell receptors are antigen specific receptors which are essential to the immune response and are present on the cell surface of T lymphocytes. Recognize peptide-major histocompatibility (MH) (pMH) complexes that are displayed by antigen presenting cells (APC), a prerequisite for efficient T cell adaptive immunity against pathogens. Binding of alpha-beta TR to pMH complex initiates TR-CD3 clustering on the cell surface and intracellular activation of LCK that phosphorylates the ITAM motifs of CD3G, CD3D, CD3E and CD247 enabling the recruitment of ZAP70. In turn ZAP70 phosphorylates LAT, which recruits numerous signaling molecules to form the LAT signalosome. The LAT signalosome propagates signal branching to three major signaling pathways, the calcium, the mitogen-activated protein kinase (MAPK) kinase and the nuclear factor NF-kappa-B (NF-kB) pathways, leading to the mobilization of transcription factors that are critical for gene expression and essential for T cell growth and differentiation. The T cell repertoire is generated in the thymus, by V-(D)-J rearrangement. This repertoire is then shaped by intrathymic selection events to generate a peripheral T cell pool of self-MH restricted, non-autoaggressive T cells. Post-thymic interaction of alpha-beta TR with the pMH complexes shapes TR structural and functional avidity. This chain is T cell receptor beta variable 5-4, found in Homo sapiens (Human).